A 192-amino-acid polypeptide reads, in one-letter code: Erythropoietin (192 aa).

An N-terminal signal peptide occupies residues 1–26 (MGVPERPTLLLLLSLLLIPLGLPVLC). Residues Cys33 and Cys187 are joined by a disulfide bond. N-linked (GlcNAc...) asparagine glycosylation is found at Asn50, Asn64, and Asn109.

It belongs to the EPO/TPO family. In terms of tissue distribution, produced by kidney or liver of adult mammals and by liver of fetal or neonatal mammals.

It is found in the secreted. Its function is as follows. Hormone involved in the regulation of erythrocyte proliferation and differentiation and the maintenance of a physiological level of circulating erythrocyte mass. Binds to EPOR leading to EPOR dimerization and JAK2 activation thereby activating specific downstream effectors, including STAT1 and STAT3. This is Erythropoietin (Epo) from Rattus norvegicus (Rat).